The following is a 1213-amino-acid chain: Genetic suppressor element 1 (1213 aa).

The disordered stretch occupies residues 1 to 154; that stretch reads MKGMSHEPKS…GSRGSSSGRE (154 aa). Residue S10 is modified to Phosphoserine. Residues 15 to 33 are compositionally biased toward polar residues; the sequence is MLSTATRTTATVNPLTPSP. Composition is skewed to low complexity over residues 51–63 and 76–89; these read SAQA…FAAA and GSSL…VSSP. 2 positions are modified to phosphoserine: S84 and S95. Residues 103-114 are compositionally biased toward low complexity; it reads VPMGPIIVPPGG. R305 carries the asymmetric dimethylarginine modification. Residues 319–402 are a coiled coil; it reads HSERMSSLSA…REKELLAAKA (84 aa). The segment at 326-384 is disordered; that stretch reads LSAERLQMDEELRREREREREREREADREREKEREREQREKEREKELEREREKEREREL. Basic and acidic residues predominate over residues 331 to 384; that stretch reads LQMDEELRREREREREREREADREREKEREREQREKEREKELEREREKEREREL. The residue at position 433 (T433) is a Phosphothreonine. At K496 the chain carries N6-acetyllysine. 2 disordered regions span residues 527-579 and 630-719; these read LDLG…QHTV and SEKA…TARG. Composition is skewed to basic and acidic residues over residues 537-560 and 630-643; these read EAEH…REPP and SEKA…EATP. The span at 648–657 shows a compositional bias: pro residues; it reads QPPPPPPPPR. A compositionally biased stretch (polar residues) spans 681 to 700; it reads STQTILGQQRPSLSQATSFG. K739 carries the post-translational modification N6-acetyllysine. A phosphoserine mark is found at S766, S826, S828, and S857. 3 disordered regions span residues 816-858, 898-979, and 1065-1118; these read RKRR…NNSP, LSAA…EAPG, and ELQS…PRRQ. A compositionally biased stretch (polar residues) spans 847–858; that stretch reads TRYSPDEMNNSP. Residue T905 is modified to Phosphothreonine. Position 907 is a phosphoserine (S907). The segment covering 1065-1081 has biased composition (polar residues); sequence ELQSSSRVPLPQHNGQQ. The stretch at 1093-1197 forms a coiled coil; sequence QEADQDSEED…ELDHLRKCLA (105 aa). A compositionally biased stretch (acidic residues) spans 1095–1112; sequence ADQDSEEDSEEDSEEEAE. Position 1099 is a phosphoserine (S1099).

In terms of assembly, may be a component of a BHC histone deacetylase complex that contains HDAC1, HDAC2, HMG20B/BRAF35, KDM1A, RCOR1/CoREST, PHF21A/BHC80, ZMYM2, ZNF217, ZMYM3, GSE1 and GTF2I.

This is Genetic suppressor element 1 (Gse1) from Mus musculus (Mouse).